Here is a 204-residue protein sequence, read N- to C-terminus: Ricin B-like lectin R40G3 (204 aa).

Residues 54–200 (TVKVYCRANP…CEGDNQRWKI (147 aa)) form the Ricin B-type lectin domain.

In terms of tissue distribution, expressed in shoots and lamina.

Functionally, lectin which binds carbohydrates in vitro. Interacts through its lectin domain with glycan structures containing specific motifs. The polypeptide is Ricin B-like lectin R40G3 (Oryza sativa subsp. japonica (Rice)).